The chain runs to 193 residues: Acyl carrier protein phosphodiesterase (193 aa).

The protein belongs to the AcpH family.

The enzyme catalyses holo-[ACP] + H2O = apo-[ACP] + (R)-4'-phosphopantetheine + H(+). Its function is as follows. Converts holo-ACP to apo-ACP by hydrolytic cleavage of the phosphopantetheine prosthetic group from ACP. This Escherichia coli O157:H7 protein is Acyl carrier protein phosphodiesterase.